Here is a 304-residue protein sequence, read N- to C-terminus: N-acetylmuramic acid 6-phosphate etherase (304 aa).

Residues 58–221 (IAERIHRGGR…STGVMIKLGK (164 aa)) enclose the SIS domain. Glutamate 86 serves as the catalytic Proton donor. Glutamate 117 is an active-site residue.

Belongs to the GCKR-like family. MurNAc-6-P etherase subfamily. In terms of assembly, homodimer.

It catalyses the reaction N-acetyl-D-muramate 6-phosphate + H2O = N-acetyl-D-glucosamine 6-phosphate + (R)-lactate. The protein operates within amino-sugar metabolism; N-acetylmuramate degradation. Functionally, specifically catalyzes the cleavage of the D-lactyl ether substituent of MurNAc 6-phosphate, producing GlcNAc 6-phosphate and D-lactate. The polypeptide is N-acetylmuramic acid 6-phosphate etherase (Clostridium beijerinckii (strain ATCC 51743 / NCIMB 8052) (Clostridium acetobutylicum)).